Consider the following 109-residue polypeptide: Cell division suppressor protein YneA (109 aa).

The 52-residue stretch at 39–90 (SEVNVNEGDSLWALADQYAGKSDMAKADFVSWVEKENNLSDGHVEAGDSVVI) folds into the LysM domain.

It belongs to the YneA family.

The protein localises to the cytoplasm. Its function is as follows. Inhibits cell division during the SOS response. Affects a later stage of the cell division protein assembly, after the assembly of the Z ring, by probably suppressing recruitment of FtsL and/or DivIC to the division machinery. The polypeptide is Cell division suppressor protein YneA (Listeria monocytogenes serovar 1/2a (strain ATCC BAA-679 / EGD-e)).